We begin with the raw amino-acid sequence, 318 residues long: Porphobilinogen deaminase (318 aa).

An S-(dipyrrolylmethanemethyl)cysteine modification is found at cysteine 241.

It belongs to the HMBS family. Monomer. Dipyrromethane serves as cofactor.

It carries out the reaction 4 porphobilinogen + H2O = hydroxymethylbilane + 4 NH4(+). It functions in the pathway porphyrin-containing compound metabolism; protoporphyrin-IX biosynthesis; coproporphyrinogen-III from 5-aminolevulinate: step 2/4. In terms of biological role, tetrapolymerization of the monopyrrole PBG into the hydroxymethylbilane pre-uroporphyrinogen in several discrete steps. This Geobacter sp. (strain M21) protein is Porphobilinogen deaminase.